Consider the following 232-residue polypeptide: MRIDINRIEKEEDIKLLKELKWNGFVFYQYDDEFSKDRYEEVKAIAESYKLKVYSGVKIKTESSKQLRDKVKKFRNKCHIILIEGGVLKINRAAVELHDVDILSTPELGRKDSGIDHVLARLASNHRVAIELNFKTLLNKDGYERARTLLFFRNNLKLAKKFDVPVVISTDAENKYQIKNPYDLRAFLNTLVEPLYAKKIMETAYKICDFRDYLMRDNVVRYGVEIIKEEKE.

This sequence belongs to the eukaryotic/archaeal RNase P protein component 3 family. Consists of a catalytic RNA component and at least 4-5 protein subunits. Forms a subcomplex with Rnp2 which stimulates the catalytic RNA.

It localises to the cytoplasm. It carries out the reaction Endonucleolytic cleavage of RNA, removing 5'-extranucleotides from tRNA precursor.. Its function is as follows. Part of ribonuclease P, a protein complex that generates mature tRNA molecules by cleaving their 5'-ends. This is Ribonuclease P protein component 3 from Methanocaldococcus jannaschii (strain ATCC 43067 / DSM 2661 / JAL-1 / JCM 10045 / NBRC 100440) (Methanococcus jannaschii).